Consider the following 429-residue polypeptide: Glutamate-1-semialdehyde 2,1-aminomutase (429 aa).

Residue Lys-266 is modified to N6-(pyridoxal phosphate)lysine.

It belongs to the class-III pyridoxal-phosphate-dependent aminotransferase family. HemL subfamily. Pyridoxal 5'-phosphate serves as cofactor.

The protein resides in the cytoplasm. The catalysed reaction is (S)-4-amino-5-oxopentanoate = 5-aminolevulinate. It participates in porphyrin-containing compound metabolism; protoporphyrin-IX biosynthesis; 5-aminolevulinate from L-glutamyl-tRNA(Glu): step 2/2. This chain is Glutamate-1-semialdehyde 2,1-aminomutase (hemL), found in Aeropyrum pernix (strain ATCC 700893 / DSM 11879 / JCM 9820 / NBRC 100138 / K1).